A 251-amino-acid chain; its full sequence is MDFPSIKIKDFEGPFDLLLHLIKKNQMDIYNVEISKITNQYLKYIDEMKFMDLEITSEFIVVAATLIEIKSKHLLPKIKKDEEEDEEDQEKNLIEKLILYKKIKKAAEFFKDRYVNSGELYTKKPEIIEEINLTNNNEDIFKNLTLLELYNMYNNLLEIYNNKQNKANVIQKRIYVDKYKIEDKLKYLLGLIENNEVSKFSEIIDKCECKLECIVSFLALLEMVKLKKVRVYQSDSFDNILIERRQDDREE.

The protein belongs to the ScpA family. Component of a cohesin-like complex composed of ScpA, ScpB and the Smc homodimer, in which ScpA and ScpB bind to the head domain of Smc. The presence of the three proteins is required for the association of the complex with DNA.

Its subcellular location is the cytoplasm. Participates in chromosomal partition during cell division. May act via the formation of a condensin-like complex containing Smc and ScpB that pull DNA away from mid-cell into both cell halves. The sequence is that of Segregation and condensation protein A from Clostridium botulinum (strain Alaska E43 / Type E3).